Consider the following 286-residue polypeptide: Transcription factor MYB62 (286 aa).

HTH myb-type domains are found at residues 16-68 (DEEL…LNYL) and 69-123 (KPDI…QKQA). 2 consecutive DNA-binding regions (H-T-H motif) follow at residues 44 to 68 (WNHV…LNYL) and 96 to 119 (WSKI…RTRV).

Expressed in leaves and flowers.

The protein localises to the nucleus. Functionally, transcription repressor of phosphate (Pi) starvation-induced genes. Negatively regulates Pi starvation responses via the repression of gibberellic acid (GA) biosynthesis and signaling. Modulates root architecture, phosphatase activity, and Pi uptake and accumulation. The protein is Transcription factor MYB62 of Arabidopsis thaliana (Mouse-ear cress).